The primary structure comprises 501 residues: Pyruvate kinase 1 (501 aa).

Arg-50 lines the substrate pocket. Asn-52, Ser-54, Asp-85, and Thr-86 together coordinate K(+). An ATP-binding site is contributed by 52 to 55; the sequence is NFSH. Residues Arg-92 and Lys-178 each contribute to the ATP site. Glu-243 is a Mg(2+) binding site. 3 residues coordinate substrate: Gly-266, Asp-267, and Thr-299. Asp-267 contacts Mg(2+).

The protein belongs to the pyruvate kinase family. Homotetramer. It depends on Mg(2+) as a cofactor. K(+) serves as cofactor.

It carries out the reaction pyruvate + ATP = phosphoenolpyruvate + ADP + H(+). Its pathway is carbohydrate degradation; glycolysis; pyruvate from D-glyceraldehyde 3-phosphate: step 5/5. In Candida glabrata (strain ATCC 2001 / BCRC 20586 / JCM 3761 / NBRC 0622 / NRRL Y-65 / CBS 138) (Yeast), this protein is Pyruvate kinase 1 (PYK1).